Here is a 358-residue protein sequence, read N- to C-terminus: DNA integrity scanning protein DisA (358 aa).

Positions 6–144 constitute a DAC domain; sequence RPTLREAVAR…RGERHVLTDS (139 aa). ATP-binding positions include glycine 73, leucine 91, and 104-108; that span reads TRHRS.

Belongs to the DisA family. In terms of assembly, homooctamer. Mg(2+) is required as a cofactor.

It catalyses the reaction 2 ATP = 3',3'-c-di-AMP + 2 diphosphate. Its function is as follows. Participates in a DNA-damage check-point. DisA forms globular foci that rapidly scan along the chromosomes searching for lesions. Also has diadenylate cyclase activity, catalyzing the condensation of 2 ATP molecules into cyclic di-AMP (c-di-AMP). c-di-AMP likely acts as a signaling molecule that may couple DNA integrity with a cellular process. This chain is DNA integrity scanning protein DisA, found in Mycobacterium bovis (strain ATCC BAA-935 / AF2122/97).